The following is a 571-amino-acid chain: Proline--tRNA ligase (571 aa).

Belongs to the class-II aminoacyl-tRNA synthetase family. ProS type 1 subfamily. In terms of assembly, homodimer.

The protein resides in the cytoplasm. The enzyme catalyses tRNA(Pro) + L-proline + ATP = L-prolyl-tRNA(Pro) + AMP + diphosphate. Its function is as follows. Catalyzes the attachment of proline to tRNA(Pro) in a two-step reaction: proline is first activated by ATP to form Pro-AMP and then transferred to the acceptor end of tRNA(Pro). As ProRS can inadvertently accommodate and process non-cognate amino acids such as alanine and cysteine, to avoid such errors it has two additional distinct editing activities against alanine. One activity is designated as 'pretransfer' editing and involves the tRNA(Pro)-independent hydrolysis of activated Ala-AMP. The other activity is designated 'posttransfer' editing and involves deacylation of mischarged Ala-tRNA(Pro). The misacylated Cys-tRNA(Pro) is not edited by ProRS. The protein is Proline--tRNA ligase of Vibrio campbellii (strain ATCC BAA-1116).